A 3658-amino-acid chain; its full sequence is Serine/threonine-protein kinase SMG1 (3658 aa).

Disordered regions lie at residues 1–99 (MSRR…TYGR) and 116–142 (FTSVQHGSRALATKDMRKSQERSMSYS). Polar residues predominate over residues 24–33 (NDWQPRTDSA). Basic and acidic residues-rich tracts occupy residues 67 to 84 (QRHDDTRGHADIQNDEKG) and 127 to 136 (ATKDMRKSQE). Residue Lys-171 is modified to N6-acetyllysine. In terms of domain architecture, FAT spans 1281–1864 (RELQKSIEVQ…LYPAIVGTIS (584 aa)). Residues 1815–1850 (APWRGIIPQLFSRLNHPEVYVRQSICNLLCRVAQDS) form an HEAT repeat. The tract at residues 1896-1917 (ECEGGSPPASQDSNKDEPKSGL) is disordered. Residues 2122–2461 (VGGTITILPT…MEREITRSLF (340 aa)) form the PI3K/PI4K catalytic domain. Residues 2128–2134 (ILPTKTK) form a G-loop region. Positions 2330–2338 (GLGDRHLDN) are catalytic loop. The tract at residues 2350–2374 (HIDYNVCFEKGKSLRVPEKVPFRMT) is activation loop. At Thr-3547 the chain carries Phosphothreonine. A phosphoserine mark is found at Ser-3553 and Ser-3567. The span at 3565-3576 (ATSADTPPSTIP) shows a compositional bias: polar residues. A disordered region spans residues 3565–3588 (ATSADTPPSTIPGTGKSIACSPKK). A phosphothreonine mark is found at Thr-3570 and Thr-3574. Residues 3626-3658 (RRMSVAEQVDYVIKEATNLDNLAQLYEGWTAWV) enclose the FATC domain.

It belongs to the PI3/PI4-kinase family. In terms of assembly, component of the SMG1C complex composed of SMG1, SMG8 and SMG9; the recruitment of SMG8 to SMG1 N-terminus induces a large conformational change in the SMG1 C-terminal head domain containing the catalytic domain. Component of the transient SURF (SMG1-UPF1-eRF1-eRF3) complex. Part of a complex composed of SMG1, DHX34 and UPF1; within the complex DHX34 acts as a scaffolding protein to facilitate SMG1 phosphorylation of UPF1. Interacts with PRKCI. Interacts with TELO2 and TTI1. Interacts with RUVBL1 and RUVBL2. Interacts with DHX34 (via C-terminus); the interaction is RNA-independent. The cofactor is Mn(2+). Autophosphorylated.

The protein localises to the nucleus. The protein resides in the cytoplasm. It carries out the reaction L-seryl-[protein] + ATP = O-phospho-L-seryl-[protein] + ADP + H(+). The catalysed reaction is L-threonyl-[protein] + ATP = O-phospho-L-threonyl-[protein] + ADP + H(+). Its activity is regulated as follows. Inhibited by caffeine, LY294002 and wortmannin. Its function is as follows. Serine/threonine protein kinase involved in both mRNA surveillance and genotoxic stress response pathways. Recognizes the substrate consensus sequence [ST]-Q. Plays a central role in nonsense-mediated decay (NMD) of mRNAs containing premature stop codons by phosphorylating UPF1/RENT1. Recruited by release factors to stalled ribosomes together with SMG8 and SMG9 (forming the SMG1C protein kinase complex), and UPF1 to form the transient SURF (SMG1-UPF1-eRF1-eRF3) complex. In EJC-dependent NMD, the SURF complex associates with the exon junction complex (EJC) through UPF2 and allows the formation of an UPF1-UPF2-UPF3 surveillance complex which is believed to activate NMD. Also acts as a genotoxic stress-activated protein kinase that displays some functional overlap with ATM. Can phosphorylate p53/TP53 and is required for optimal p53/TP53 activation after cellular exposure to genotoxic stress. Its depletion leads to spontaneous DNA damage and increased sensitivity to ionizing radiation (IR). May activate PRKCI but not PRKCZ. This Mus musculus (Mouse) protein is Serine/threonine-protein kinase SMG1.